Reading from the N-terminus, the 156-residue chain is MPRRRVAAKREILDDPKYGSQILAKFMNHVMESGKKAVAERIVYGALDTVKSRKNSDPLEIFEKALDAIAPLVEVKSRRVGGATYQVPVEVRPSRRNALAMRWLVDSARKRGEKSMALRLAGELLDASEGKGAAVKKREDVHRMAEANKAFSHYRF.

This sequence belongs to the universal ribosomal protein uS7 family. In terms of assembly, part of the 30S ribosomal subunit. Contacts proteins S9 and S11.

One of the primary rRNA binding proteins, it binds directly to 16S rRNA where it nucleates assembly of the head domain of the 30S subunit. Is located at the subunit interface close to the decoding center, probably blocks exit of the E-site tRNA. The sequence is that of Small ribosomal subunit protein uS7 from Azotobacter vinelandii (strain DJ / ATCC BAA-1303).